Reading from the N-terminus, the 292-residue chain is MEMO1 family protein PF1638 (292 aa).

This sequence belongs to the MEMO1 family.

The chain is MEMO1 family protein PF1638 from Pyrococcus furiosus (strain ATCC 43587 / DSM 3638 / JCM 8422 / Vc1).